The chain runs to 616 residues: Angiotensin-converting enzyme (616 aa).

The signal sequence occupies residues M1–S23. Positions L27 to K610 constitute a Peptidase M2 domain. N61 and N96 each carry an N-linked (GlcNAc...) asparagine glycan. C142 and C152 form a disulfide bridge. 2 residues coordinate chloride: R180 and Y218. The N-linked (GlcNAc...) asparagine glycan is linked to N303. An intrachain disulfide couples C345 to C363. H376 is a Zn(2+) binding site. E377 (proton acceptor) is an active-site residue. 2 residues coordinate Zn(2+): H380 and E404. Residue N428 is glycosylated (N-linked (GlcNAc...) asparagine). Positions 478 and 482 each coordinate chloride. Residue H506 is the Proton donor of the active site. R515 contributes to the chloride binding site. The cysteines at positions 531 and 543 are disulfide-linked. N-linked (GlcNAc...) asparagine glycosylation is found at N535 and N573.

This sequence belongs to the peptidase M2 family. The cofactor is Zn(2+). It depends on chloride as a cofactor. In terms of tissue distribution, epithelial cells of the midgut.

Its subcellular location is the secreted. The protein localises to the extracellular space. The enzyme catalyses Release of a C-terminal dipeptide, oligopeptide-|-Xaa-Yaa, when Xaa is not Pro, and Yaa is neither Asp nor Glu. Thus, conversion of angiotensin I to angiotensin II, with increase in vasoconstrictor activity, but no action on angiotensin II.. Activated by chloride. Inhibited by captopril and lisinopril, and to a lesser extent by delaprilat. This Theromyzon tessulatum (Duck leech) protein is Angiotensin-converting enzyme (ACE).